Consider the following 474-residue polypeptide: Adenosylhomocysteinase (474 aa).

Substrate-binding residues include Thr-53, Asp-135, and Glu-197. An NAD(+)-binding site is contributed by 198–200; sequence TTT. Substrate contacts are provided by Lys-227 and Asp-231. NAD(+) is bound by residues Asn-232, 261–266, Glu-284, Asn-319, 340–342, and Asn-388; these read GYGDVG and IGH.

It belongs to the adenosylhomocysteinase family. Requires NAD(+) as cofactor.

The protein resides in the cytoplasm. It catalyses the reaction S-adenosyl-L-homocysteine + H2O = L-homocysteine + adenosine. It participates in amino-acid biosynthesis; L-homocysteine biosynthesis; L-homocysteine from S-adenosyl-L-homocysteine: step 1/1. Its function is as follows. May play a key role in the regulation of the intracellular concentration of adenosylhomocysteine. The polypeptide is Adenosylhomocysteinase (Corynebacterium glutamicum (strain ATCC 13032 / DSM 20300 / JCM 1318 / BCRC 11384 / CCUG 27702 / LMG 3730 / NBRC 12168 / NCIMB 10025 / NRRL B-2784 / 534)).